The chain runs to 226 residues: Type-5 uracil-DNA glycosylase (226 aa).

4 residues coordinate [4Fe-4S] cluster: Cys-23, Cys-26, Cys-125, and Cys-140.

This sequence belongs to the uracil-DNA glycosylase (UDG) superfamily. Type 5 (UDGb) family.

Its function is as follows. DNA glycosylase with broad substrate specificity. Can remove uracil from double-stranded DNA containing either a U/G or U/A base pair. Can also process hydroxymethyluracil (mispaired with guanine or adenine), hypoxanthine and fluorouracil. Exhibits a clear preference for double-stranded DNA substrates, but can also process uracil in single-stranded DNA, with lower efficiency. The sequence is that of Type-5 uracil-DNA glycosylase from Pyrobaculum aerophilum (strain ATCC 51768 / DSM 7523 / JCM 9630 / CIP 104966 / NBRC 100827 / IM2).